Here is a 65-residue protein sequence, read N- to C-terminus: Large ribosomal subunit protein uL29 (65 aa).

This sequence belongs to the universal ribosomal protein uL29 family.

The polypeptide is Large ribosomal subunit protein uL29 (Desulforamulus reducens (strain ATCC BAA-1160 / DSM 100696 / MI-1) (Desulfotomaculum reducens)).